A 1191-amino-acid chain; its full sequence is MERPLENGDESPDSQGHATDWRFAVCSFRDAWEEEEPASQMHVKDPGPPRPPAGATQDEELQGSPLSRKFQLPPAADESGDAQRGTVESSSVLSEGPGPSGVESLLCPMSSHLSLAQGESDTPGVGLVGDPGPSRAMPSGLSPGALDSDPVGLGDPLSEISKLLEAAPSGSGLPKPADCLLAQDLCWELLASGMATLPGTRDVQGRAVLLLCAHSPAWLQSECSSQELIRLLLYLRSIPRPEVQALGLTVLVDARICAPSSSLFSGLSQLQEAAPGAVYQVLLVGSTLLKEVPSGLQLEQLPSQSLLTHIPTAGLPTSLGGGLPYCHQAWLDFRRRLEALLQNCQAACALLQGAIESVKAVPQPMEPGEVGQLLQQTEVLMQQVLDSPWLAWLQCQGGRELTWLKQEVPEVTLSPDYRTAMDKADELYDRVDGLLHQLTLQSNQRIQALELVQTLEARESGLHQIEVWLQQVGWPALEEAGEPSLDMLLQAQGSFQELYQVAQEQVRQGEKFLQPLTGWEAAELDPPGARFLALRAQLTEFSRALAQRCQRLADAERLFQLFREALTWAEEGQRVLAELEQERPGVVLQQLQLHWTRHPDLPPAHFRKMWALATGLGSEAIRQECRWAWARCQDTWLALDQKLEASLKLPPVGSTASLCVSQVPAAPAHPPLRKAYSFDRNLGQSLSEPACHCHHAATIAACRRPEAGGGALPQASPTVPPPGSSDPRSLNRLQLVLAEMVATEREYVRALEYTMENYFPELDRPDVPQGLRGQRAHLFGNLEKLRDFHCHFFLRELEACTRHPPRVAYAFLRHRVQFGMYALYSKNKPRSDALMSSYGHTFFKDKQQALGDHLDLASYLLKPIQRMGKYALLLQELARACGGPTQELSALREAQSLVHFQLRHGNDLLAMDAIQGCDVNLKEQGQLVRQDEFVVRTGRHKSVRRIFLFEELLLFSKPRHGPTGVDTFAYKRSFKMADLGLTECCGNSNLRFEIWFRRRKARDTFVLQASSLAIKQAWTADISHLLWRQAVHNKEVRMAEMVSMGVGNKAFRDIAPSEEAINDRTVNYVLKCREVRSRASIAVAPFDHDSLYLGASNSLPGDPASCSVLGSLNLHLYRDPALLGLRCPLYPSFPEEAALEAEAELGGQPSLTAEDSEISSQCPSASGSSGSDSSCVSGQALGRGLEDLPCV.

Disordered regions lie at residues 1 to 152 and 707 to 728; these read MERP…DPVG and AGGG…SDPR. S64 carries the post-translational modification Phosphoserine. Positions 111–120 are enriched in polar residues; sequence SHLSLAQGES. The DH domain maps to 732–908; sequence RLQLVLAEMV…HFQLRHGNDL (177 aa). The PH domain occupies 920-1027; it reads NLKEQGQLVR…WTADISHLLW (108 aa). Positions 1150–1176 are disordered; sequence SLTAEDSEISSQCPSASGSSGSDSSCV. Low complexity predominate over residues 1159–1176; the sequence is SSQCPSASGSSGSDSSCV.

In terms of tissue distribution, expressed in kidney, Leydig cells in the testis, epithelial cells in the prostate gland and Langerhans islet in the pancreas. Isoform 1 and isoform 3 are strongly expressed in Purkinje cells and to a lower extent in other neurons (at protein level). Widely expressed at low levels. More strongly expressed in testis and pancreas.

In terms of biological role, possible role in intracellular signaling and cytoskeleton dynamics at the Golgi. The chain is Puratrophin-1 (PLEKHG4) from Homo sapiens (Human).